Reading from the N-terminus, the 464-residue chain is Phosphoenolpyruvate carboxylase (464 aa).

Belongs to the PEPCase type 2 family. In terms of assembly, homotetramer. Mg(2+) serves as cofactor.

It catalyses the reaction oxaloacetate + phosphate = phosphoenolpyruvate + hydrogencarbonate. Its function is as follows. Catalyzes the irreversible beta-carboxylation of phosphoenolpyruvate (PEP) to form oxaloacetate (OAA), a four-carbon dicarboxylic acid source for the tricarboxylic acid cycle. In Thermofilum pendens (strain DSM 2475 / Hrk 5), this protein is Phosphoenolpyruvate carboxylase.